A 551-amino-acid polypeptide reads, in one-letter code: Dol-P-Man:Man(7)GlcNAc(2)-PP-Dol alpha-1,6-mannosyltransferase (551 aa).

At 1-2 (MR) the chain is on the lumenal side. The chain crosses the membrane as a helical span at residues 3-23 (WSVLDTVLLTVISFHLIQAPF). At 24–61 (TKVEESFNIQAIHDILTYSVFDISQYDHLKFPGVVPRT) the chain is on the cytoplasmic side. A helical membrane pass occupies residues 62–82 (FVGAVIIAMLSRPYLYLSSLI). Topologically, residues 83-89 (QTSRPTS) are lumenal. Residues 90–110 (IDVQLVVRGIVGLTNGLSFIY) form a helical membrane-spanning segment. Residues 111-136 (LKNCLQDMFDEITEKKKEENEDKDIY) are Cytoplasmic-facing. A helical membrane pass occupies residues 137 to 157 (IYDSAGTWFLLFLIGSFHLMF). Residues 158–178 (YSTRTLPNFVMTLPLTNVALG) are Lumenal-facing. The chain crosses the membrane as a helical span at residues 179–199 (WVLLGRYNAAIFLSALVAIVF). Residues 200–202 (RLE) lie on the Cytoplasmic side of the membrane. A helical membrane pass occupies residues 203–223 (VSALSAGIALFSVIFKKISLF). The Lumenal segment spans residues 224–227 (DAIK). A helical membrane pass occupies residues 228–248 (FGIFGLGLGSAISITVDSYFW). The Cytoplasmic segment spans residues 249–275 (QEWCLPEVDGFLFNVVAGYASKWGVEP). The chain crosses the membrane as a helical span at residues 276 to 296 (VTAYFTHYLRMMFMPPTVLLL). The Lumenal portion of the chain corresponds to 297–303 (NYFGYKL). Residues 304–324 (APAKLKIVSLASLFHIIVLSF) traverse the membrane as a helical segment. Residues 325 to 331 (QPHKEWR) are Cytoplasmic-facing. Residues 332 to 352 (FIIYAVPSIMLLGATGAAHLW) form a helical membrane-spanning segment. Topologically, residues 353-365 (ENMKVKKITNVLC) are lumenal. A helical transmembrane segment spans residues 366-386 (LAILPLSIMTSFFISMAFLYI). The Cytoplasmic portion of the chain corresponds to 387–417 (SRMNYPGGEALTSFNDMIVEKNITNATVHIS). The chain crosses the membrane as a helical span at residues 418–438 (IPPCMTGVTLFGELNYGVYGI). The Lumenal segment spans residues 439 to 551 (NYDKTENTTL…KRIKQDEKTD (113 aa)).

The protein belongs to the glycosyltransferase 22 family.

The protein resides in the endoplasmic reticulum membrane. The enzyme catalyses an alpha-D-Man-(1-&gt;2)-alpha-D-Man-(1-&gt;2)-alpha-D-Man-(1-&gt;3)-[alpha-D-Man-(1-&gt;2)-alpha-D-Man-(1-&gt;3)-alpha-D-Man-(1-&gt;6)]-beta-D-Man-(1-&gt;4)-beta-D-GlcNAc-(1-&gt;4)-alpha-D-GlcNAc-diphospho-di-trans,poly-cis-dolichol + a di-trans,poly-cis-dolichyl beta-D-mannosyl phosphate = an alpha-D-Man-(1-&gt;2)-alpha-D-Man-(1-&gt;2)-alpha-D-Man-(1-&gt;3)-[alpha-D-Man-(1-&gt;2)-alpha-D-Man-(1-&gt;3)-[alpha-D-Man-(1-&gt;6)]-alpha-D-Man-(1-&gt;6)]-beta-D-Man-(1-&gt;4)-beta-D-GlcNAc-(1-&gt;4)-alpha-D-GlcNAc-diphospho-di-trans,poly-cis-dolichol + a di-trans,poly-cis-dolichyl phosphate + H(+). It functions in the pathway protein modification; protein glycosylation. Functionally, mannosyltransferase that operates in the biosynthetic pathway of dolichol-linked oligosaccharides, the glycan precursors employed in protein asparagine (N)-glycosylation. The assembly of dolichol-linked oligosaccharides begins on the cytosolic side of the endoplasmic reticulum membrane and finishes in its lumen. The sequential addition of sugars to dolichol pyrophosphate produces dolichol-linked oligosaccharides containing fourteen sugars, including two GlcNAcs, nine mannoses and three glucoses. Once assembled, the oligosaccharide is transferred from the lipid to nascent proteins by oligosaccharyltransferases. In the lumen of the endoplasmic reticulum, adds the eighth mannose residue in an alpha-1,6 linkage onto Man(7)GlcNAc(2)-PP-dolichol to produce Man(8)GlcNAc(2)-PP-dolichol. The polypeptide is Dol-P-Man:Man(7)GlcNAc(2)-PP-Dol alpha-1,6-mannosyltransferase (ALG12) (Saccharomyces cerevisiae (strain ATCC 204508 / S288c) (Baker's yeast)).